The primary structure comprises 1073 residues: MEHVLPGQAPIRDFVHHNTLHGFQHLPFAAALEEAERLTGIRGYLPENEFRALHRKGRIDDADIDTVLDRHLGAAGEEILAVAGGEPVTRRQIHRLRLTVDLEPVDPARFTWLVDELEALDRFDPEVSPEARRRLMESAKRGRGEAVASRRLVRDLWDACLERLGLGDYTASHPEDLLGHAIAHAEALYADFKAESSGGGLSVSHRAMREEARALLAEEIDAVGREQTLRGFILKLTGQDVLDRVRPQLIRHCASHLDEGLAAWHSPDRSLGFYAAWKRSMRHGAEGGLGEVPLGHAELDALPDDPAEVVVFELEQRGIPLPYWEGYLERLALELPGWSGMMNWRAHRPLYRANRTAPVSLMDYLAVRLILDRRYLGRICSETWGIGGHIGELARYFEAHLSEFVVRHALYCGDLPEFLAATCADLVRRAGCERVDRKPWRVAADMIFSWRHAPGAGRDLRIRLHGSGWRLFKLAQHLGLSAHDVQALSASEIERLLCALDELTPAQRGYLWLCAYERHYREPLFNALASNHGRGRWATRDERPQAQIVFCMDDREEGVRRHLEELNPAVETLGAAGFFGIPMYWQGLDDAEPSALCPIVVIPSHEVREVPRPGEEAARRLHDHRRGVVRLLGRVFNQEIRRNLLSSHLLIDLVAPGVAVGLIAKVLLPRWAATLSRWLADLWMPEVPTTLALHAADDAAPAGPEQPRPGLTDAEQADRVAAFLLNIGLTQGFAPIVVLMGHGSASRNNPHLAAYDCGACSGRHGGPNARVFAAMANRPQVREQLAQRGLVVPADTWFVGAEHNTCSEEITWFDVQDIPPLSRIGWHAFAAQLDEACRLSAQERCRRFASAPRRPSPARALRHVSTRSVDFSQARPELGHATNAAALIGRRSVSRGLFLDRRVFLISYDPTRDPEGRILEGILLAAGPVGAGINLEYYFSTVNNERHGCGSKVAHNVTGLFGIMEGAASDLRTGLPRQMAEVHEAMRLQVVVEQTPEILAAIYRRQPPIRELVGNGWILLSAIDPGDGTISVFDPERGFVPWAGAATDMALCGRSTDWFEGHVEPLAPALIAV.

The Zn(2+) site is built by Cys-551, Asp-553, His-742, and Cys-757.

This sequence belongs to the inorganic carbon transporter (TC 9.A.2) DabA family. Forms a complex with DabB. It depends on Zn(2+) as a cofactor.

The protein localises to the cell inner membrane. Its function is as follows. Part of an energy-coupled inorganic carbon pump. In Methylococcus capsulatus (strain ATCC 33009 / NCIMB 11132 / Bath), this protein is Probable inorganic carbon transporter subunit DabA.